The sequence spans 194 residues: dCTP deaminase (194 aa).

DCTP is bound by residues 110–115, Asp-128, 136–138, Tyr-171, Lys-178, and Gln-182; these read RSSLAR and VLE. The Proton donor/acceptor role is filled by Glu-138.

Belongs to the dCTP deaminase family. In terms of assembly, homotrimer.

The catalysed reaction is dCTP + H2O + H(+) = dUTP + NH4(+). The protein operates within pyrimidine metabolism; dUMP biosynthesis; dUMP from dCTP (dUTP route): step 1/2. Its function is as follows. Catalyzes the deamination of dCTP to dUTP. The chain is dCTP deaminase from Mannheimia succiniciproducens (strain KCTC 0769BP / MBEL55E).